The following is a 159-amino-acid chain: S-ribosylhomocysteine lyase (159 aa).

Fe cation-binding residues include His-53, His-57, and Cys-124.

It belongs to the LuxS family. In terms of assembly, homodimer. Fe cation serves as cofactor.

It catalyses the reaction S-(5-deoxy-D-ribos-5-yl)-L-homocysteine = (S)-4,5-dihydroxypentane-2,3-dione + L-homocysteine. In terms of biological role, involved in the synthesis of autoinducer 2 (AI-2) which is secreted by bacteria and is used to communicate both the cell density and the metabolic potential of the environment. The regulation of gene expression in response to changes in cell density is called quorum sensing. Catalyzes the transformation of S-ribosylhomocysteine (RHC) to homocysteine (HC) and 4,5-dihydroxy-2,3-pentadione (DPD). The polypeptide is S-ribosylhomocysteine lyase (Clostridium beijerinckii (strain ATCC 51743 / NCIMB 8052) (Clostridium acetobutylicum)).